The primary structure comprises 500 residues: NAD(P)H-quinone oxidoreductase chain 4, chloroplastic (500 aa).

14 consecutive transmembrane segments (helical) span residues 4–24 (FPWL…IFFF), 35–55 (YTIC…CYHF), 87–107 (IGPV…AWPV), 113–130 (LFHF…GSFS), 134–154 (LLLF…LLSM), 167–187 (FILY…GMGL), 208–228 (ALEI…LPII), 242–262 (HYST…YGLV), 272–292 (AHSI…IYAA), 305–325 (IAYS…SITD), 330–350 (GAIL…FLAG), 386–406 (LALP…GIIT), 416–436 (ILIT…SLSM), and 463–483 (FVSI…DFVF).

It belongs to the complex I subunit 4 family.

The protein localises to the plastid. Its subcellular location is the chloroplast thylakoid membrane. The enzyme catalyses a plastoquinone + NADH + (n+1) H(+)(in) = a plastoquinol + NAD(+) + n H(+)(out). It carries out the reaction a plastoquinone + NADPH + (n+1) H(+)(in) = a plastoquinol + NADP(+) + n H(+)(out). This is NAD(P)H-quinone oxidoreductase chain 4, chloroplastic from Nandina domestica (Heavenly bamboo).